The following is a 266-amino-acid chain: MNIFQTIVLALVQGLSEFLPISSSAHLILVPELTNWTDQSLAFDVVVHMGTLSAVIFYYQAMIKCLFFDFYHSIIKRQTIGESKLAWGVLLGTIPVGLVGMIFRDSIATDLRSVEIIAYATLVFGVLLGFASWFSHRNKNQKSTISWVDIGFIGMAQTLALIPGTSRSGITITACMLVGLSRKLSIQFAFLLSIPVISLSLILILIDLYHQAQLVNVSLLAMGFVVAAISAYVTIVFFIKLIDAVGMMPFVIYRLTLGIFLFFFIL.

The next 8 membrane-spanning stretches (helical) occupy residues 1-21 (MNIFQTIVLALVQGLSEFLPI), 43-63 (FDVVVHMGTLSAVIFYYQAMI), 83-103 (SKLAWGVLLGTIPVGLVGMIF), 114-134 (VEIIAYATLVFGVLLGFASWF), 144-164 (TISWVDIGFIGMAQTLALIPG), 186-206 (IQFAFLLSIPVISLSLILILI), 219-239 (LLAMGFVVAAISAYVTIVFFI), and 245-265 (VGMMPFVIYRLTLGIFLFFFI).

This sequence belongs to the UppP family.

The protein resides in the cell inner membrane. It carries out the reaction di-trans,octa-cis-undecaprenyl diphosphate + H2O = di-trans,octa-cis-undecaprenyl phosphate + phosphate + H(+). Catalyzes the dephosphorylation of undecaprenyl diphosphate (UPP). Confers resistance to bacitracin. This Ruthia magnifica subsp. Calyptogena magnifica protein is Undecaprenyl-diphosphatase.